The chain runs to 95 residues: Small ribosomal subunit protein bS6 (95 aa).

The protein belongs to the bacterial ribosomal protein bS6 family.

Its function is as follows. Binds together with bS18 to 16S ribosomal RNA. This chain is Small ribosomal subunit protein bS6, found in Corynebacterium jeikeium (strain K411).